The primary structure comprises 93 residues: Putative membrane protein insertion efficiency factor (93 aa).

A disordered region spans residues 72 to 93 (VPEHFPSWRGPHPKTPSRKTPE). A compositionally biased stretch (basic residues) spans 82–93 (PHPKTPSRKTPE).

The protein belongs to the UPF0161 family.

It localises to the cell membrane. In terms of biological role, could be involved in insertion of integral membrane proteins into the membrane. This chain is Putative membrane protein insertion efficiency factor, found in Deinococcus geothermalis (strain DSM 11300 / CIP 105573 / AG-3a).